A 271-amino-acid polypeptide reads, in one-letter code: Phosphatidylglycerol--prolipoprotein diacylglyceryl transferase (271 aa).

The next 4 membrane-spanning stretches (helical) occupy residues 25-45 (WYGI…KFFV), 60-80 (YFIW…ILIY), 103-123 (FVGI…IATL), and 131-151 (ANPW…YVFG). A 1,2-diacyl-sn-glycero-3-phospho-(1'-sn-glycerol) is bound at residue arginine 152. A run of 3 helical transmembrane segments spans residues 181–201 (PSQL…VYLA), 209–229 (GELI…CEFY), and 235–255 (GIGF…IMFI).

It belongs to the Lgt family.

The protein resides in the cell inner membrane. It carries out the reaction L-cysteinyl-[prolipoprotein] + a 1,2-diacyl-sn-glycero-3-phospho-(1'-sn-glycerol) = an S-1,2-diacyl-sn-glyceryl-L-cysteinyl-[prolipoprotein] + sn-glycerol 1-phosphate + H(+). It participates in protein modification; lipoprotein biosynthesis (diacylglyceryl transfer). Catalyzes the transfer of the diacylglyceryl group from phosphatidylglycerol to the sulfhydryl group of the N-terminal cysteine of a prolipoprotein, the first step in the formation of mature lipoproteins. The chain is Phosphatidylglycerol--prolipoprotein diacylglyceryl transferase from Campylobacter jejuni (strain RM1221).